A 385-amino-acid chain; its full sequence is Polyketide synthase 3 (385 aa).

Cys157 is a catalytic residue.

The protein belongs to the thiolase-like superfamily. Chalcone/stilbene synthases family. As to expression, expressed in male and female flowers, and seedlings.

Its subcellular location is the cytoplasm. In terms of biological role, polyketide synthase responsible for the biosynthesis of secondary metabolites. The protein is Polyketide synthase 3 (PKSF3) of Cannabis sativa (Hemp).